Here is a 153-residue protein sequence, read N- to C-terminus: 3-hydroxyacyl-[acyl-carrier-protein] dehydratase FabZ (153 aa).

H54 is an active-site residue.

This sequence belongs to the thioester dehydratase family. FabZ subfamily.

The protein localises to the cytoplasm. It carries out the reaction a (3R)-hydroxyacyl-[ACP] = a (2E)-enoyl-[ACP] + H2O. Functionally, involved in unsaturated fatty acids biosynthesis. Catalyzes the dehydration of short chain beta-hydroxyacyl-ACPs and long chain saturated and unsaturated beta-hydroxyacyl-ACPs. The polypeptide is 3-hydroxyacyl-[acyl-carrier-protein] dehydratase FabZ (Shewanella loihica (strain ATCC BAA-1088 / PV-4)).